Reading from the N-terminus, the 28-residue chain is Potassium channel toxin alpha-KTx 13.2 (28 aa).

3 disulfides stabilise this stretch: Cys-2–Cys-19, Cys-6–Cys-24, and Cys-10–Cys-26. An interaction with Ca(2+)-activated K(+) channels region spans residues Ile-17–Cys-24.

The protein belongs to the short scorpion toxin superfamily. Potassium channel inhibitor family. Alpha-KTx 13 subfamily. Expressed by the venom gland.

The protein resides in the secreted. In terms of biological role, potent and selective inhibitor of Kv1.2/KCNA2 potassium channels. In Orthochirus scrobiculosus (Central Asian scorpion), this protein is Potassium channel toxin alpha-KTx 13.2.